Consider the following 219-residue polypeptide: Ribose-5-phosphate isomerase A (219 aa).

Residues 28 to 31 (SGST), 81 to 84 (DGAD), and 94 to 97 (KGGG) contribute to the substrate site. The Proton acceptor role is filled by Glu-103. Position 121 (Lys-121) interacts with substrate.

Belongs to the ribose 5-phosphate isomerase family. In terms of assembly, homodimer.

It carries out the reaction aldehydo-D-ribose 5-phosphate = D-ribulose 5-phosphate. The protein operates within carbohydrate degradation; pentose phosphate pathway; D-ribose 5-phosphate from D-ribulose 5-phosphate (non-oxidative stage): step 1/1. Functionally, catalyzes the reversible conversion of ribose-5-phosphate to ribulose 5-phosphate. The chain is Ribose-5-phosphate isomerase A from Haemophilus influenzae (strain ATCC 51907 / DSM 11121 / KW20 / Rd).